The primary structure comprises 179 residues: Replication restart protein DnaT (179 aa).

The segment covering 151–168 (SRSSNGGMPQRDINSVSE) has biased composition (polar residues). Residues 151–179 (SRSSNGGMPQRDINSVSEPDNHIPPGFRG) are disordered.

It belongs to the DnaT family. Homooligomerizes. Interacts with PriB. Component of the replication restart primosome. Primosome assembly occurs via a 'hand-off' mechanism. PriA binds to replication forks, subsequently PriB then DnaT bind; DnaT then displaces ssDNA to generate the helicase loading substrate.

Involved in the restart of stalled replication forks, which reloads the replicative helicase on sites other than the origin of replication. Can function in multiple replication restart pathways. Displaces ssDNA from a PriB-ssDNA complex. Probably forms a spiral filament on ssDNA. The chain is Replication restart protein DnaT from Salmonella schwarzengrund (strain CVM19633).